The following is a 90-amino-acid chain: Accessory gland-specific peptide 26Ab (90 aa).

Positions Met1–Ala21 are cleaved as a signal peptide.

In terms of tissue distribution, main cells of the accessory glands of males.

Its subcellular location is the secreted. It localises to the extracellular space. Its function is as follows. This protein is transferred from male to female during mating and may affect egglaying and behavior after mating. The protein is Accessory gland-specific peptide 26Ab (Acp26Ab) of Drosophila simulans (Fruit fly).